The following is a 508-amino-acid chain: Protein FAM217A (508 aa).

The protein belongs to the FAM217 family.

The polypeptide is Protein FAM217A (FAM217A) (Homo sapiens (Human)).